A 489-amino-acid polypeptide reads, in one-letter code: MGQIVTFFQEVPHILEEVMNIVLMTLSILAILKGIYNVMTCGIIGLITFLFLCGRSCSSIYKDNYEFFSLDLDMSSLNATMPLSCSKNNSHHYIQVGNETGLELTLTNTSIINHKFCNLSDAHRRNLYDKALMSILTTFHLSIPDFNQYEAMSCDFNGGKISVQYNLSHSNYVDAGNHCGTIANGIMDVFRRMYWSTSLSVASDISGTQCIQTDYKYLIIQNTSWEDHCMFSRPSPMGFLSLLSQRTRNFYISRRLLGLFTWTLSDSEGNDMPGGYCLTRSMLIGLDLKCFGNTAIAKCNQAHDEEFCDMLRLFDFNKQAISKLRSEVQQSINLINKAVNALINDQLVMRNHLRDLMGIPYCNYSKFWYLNDTRTGRTSLPKCWLVTNGSYLNETQFSTEIEQEANNMFTDMLRKEYEKRQSTTPLGLVDLFVFSTSFYLISVFLHLIKIPTHRHIKGKPCPKPHRLNHMAICSCGFYKQPGLPTQWKR.

Residue glycine 2 is the site of N-myristoyl glycine; by host attachment. Topologically, residues 2–17 (GQIVTFFQEVPHILEE) are extracellular. Residues 18 to 33 (VMNIVLMTLSILAILK) form a helical membrane-spanning segment. The Cytoplasmic segment spans residues 34-58 (GIYNVMTCGIIGLITFLFLCGRSCS). Cysteine 57 is a Zn(2+) binding site. Topologically, residues 59–430 (SIYKDNYEFF…QSTTPLGLVD (372 aa)) are extracellular. Residues asparagine 78, asparagine 88, asparagine 98, asparagine 108, asparagine 118, and asparagine 166 are each glycosylated (N-linked (GlcNAc...) asparagine; by host). 6 disulfides stabilise this stretch: cysteine 85–cysteine 229, cysteine 117–cysteine 154, cysteine 179–cysteine 210, cysteine 277–cysteine 290, cysteine 299–cysteine 308, and cysteine 362–cysteine 383. N-linked (GlcNAc...) asparagine; by host glycosylation occurs at asparagine 222. N-linked (GlcNAc...) asparagine; by host glycosylation is found at asparagine 363, asparagine 371, asparagine 388, and asparagine 393. Residues 431–451 (LFVFSTSFYLISVFLHLIKIP) form a helical membrane-spanning segment. At 452–489 (THRHIKGKPCPKPHRLNHMAICSCGFYKQPGLPTQWKR) the chain is on the cytoplasmic side. Residues histidine 453, histidine 455, cysteine 461, histidine 465, cysteine 473, and cysteine 475 each contribute to the Zn(2+) site.

This sequence belongs to the arenaviridae GPC protein family. In terms of assembly, interacts with glycoprotein G2. Part of the GP complex (GP-C) together with glycoprotein G1 and glycoprotein G2. The GP-complex interacts with protein Z, which interacts with ribonucleocapsid; these interactions may induce virion budding. Homotrimer; disulfide-linked. In pre-fusion state, G1 homotrimers bind G2 homotrimers via ionic interactions. Part of the GP complex (GP-C) together with glycoprotein G2 and the stable signal peptide. The GP-complex interacts with protein Z, which interacts with ribonucleocapsid; these interactions may induce virion budding. As to quaternary structure, homotrimer. Interacts with the stable signal peptide. In pre-fusion state, G2 homotrimers bind G1 homotrimers via ionic interactions. Part of the GP complex (GP-C) together with glycoprotein G1 and the stable signal peptide. Acidification in the endosome triggers rearrangements, which ultimately leads to a 6 helix bundle formed by the two heptad repeat domains (HR1 and HR2) in post-fusion state. The GP-complex interacts with protein Z, which interacts with ribonucleocapsid; these interactions may induce virion budding. In terms of processing, specific enzymatic cleavages in vivo yield mature proteins. GP-C polyprotein is cleaved in the endoplasmic reticulum by the host protease MBTPS1. Only cleaved glycoprotein is incorporated into virions. Post-translationally, the SSP remains stably associated with the GP complex following cleavage by signal peptidase and plays crucial roles in the trafficking of GP through the secretory pathway. Myristoylation is necessary for GP2-mediated fusion activity.

The protein resides in the virion membrane. The protein localises to the host endoplasmic reticulum membrane. Its subcellular location is the host Golgi apparatus membrane. It localises to the host cell membrane. Functions as a cleaved signal peptide that is retained as the third component of the GP complex (GP-C). Helps to stabilize the spike complex in its native conformation. The SSP is required for efficient glycoprotein expression, post-translational maturation cleavage of G1 and G2, glycoprotein transport to the cell surface plasma membrane, formation of infectious virus particles, and acid pH-dependent glycoprotein-mediated cell fusion. In terms of biological role, forms the virion spikes together with glycoprotein G2. The glycoprotein spike trimers are connected to the underlying matrix. Interacts with the host receptor leading to virus endocytosis. Its function is as follows. Forms the virion spikes together with glycoprotein G1. The glycoprotein spike trimers are connected to the underlying matrix. Class I viral fusion protein that directs fusion of viral and host endosomal membranes, leading to delivery of the nucleocapsid into the cytoplasm. Membrane fusion is mediated by irreversible conformational changes induced by acidification. In Mastomys natalensis (African soft-furred rat), this protein is Pre-glycoprotein polyprotein GP complex.